A 45-amino-acid chain; its full sequence is Large ribosomal subunit protein bL34 (45 aa).

Residues 1–27 (MTKRTLGGTSRKRKRVSGFRVRMRSHT) are disordered. Residues 10-27 (SRKRKRVSGFRVRMRSHT) are compositionally biased toward basic residues.

It belongs to the bacterial ribosomal protein bL34 family.

This Synechococcus sp. (strain CC9902) protein is Large ribosomal subunit protein bL34.